Consider the following 1400-residue polypeptide: Alpha-(1-&gt;3)-arabinofuranosyltransferase (1400 aa).

Residues methionine 1–proline 30 form the signal peptide. Transmembrane regions (helical) follow at residues tyrosine 67 to valine 87, leucine 91 to leucine 111, isoleucine 139 to alanine 159, valine 179 to isoleucine 199, alanine 215 to leucine 235, leucine 282 to glycine 302, leucine 314 to alanine 334, and valine 401 to glycine 421. The region spanning alanine 700 to arginine 883 is the F5/8 type C domain. The next 4 membrane-spanning stretches (helical) occupy residues leucine 1256–phenylalanine 1276, tryptophan 1297–valine 1317, valine 1338–proline 1358, and tryptophan 1369–alanine 1389.

Its subcellular location is the membrane. The enzyme catalyses Adds an alpha-D-arabinofuranosyl group from trans,octacis-decaprenylphospho-beta-D-arabinofuranose at the 3-O-position of an alpha-(1-&gt;5)-arabinofuranan chain attached to a beta-(1-&gt;5)-galactofuranan chain.. It functions in the pathway cell wall biogenesis; cell wall polysaccharide biosynthesis. Involved in the biosynthesis of the arabinogalactan (AG) region of the mycolylarabinogalactan-peptidoglycan (mAGP) complex, an essential component of the mycobacterial cell wall. Catalyzes the addition of an arabinofuranosyl (Araf) residue from the sugar donor decaprenyl-phospho-arabinose (DPA) on the C-3 of an alpha-(1-&gt;5)-linked Araf from the arabinan backbone of AG. In Mycobacterium tuberculosis (strain ATCC 25618 / H37Rv), this protein is Alpha-(1-&gt;3)-arabinofuranosyltransferase (aftD).